The following is a 173-amino-acid chain: Bilin biosynthesis protein PecF (173 aa).

The protein belongs to the CpcE/RpcE/PecE family.

An enzyme involved in the biosynthesis of bilin. The chain is Bilin biosynthesis protein PecF (pecF) from Nostoc sp. (strain PCC 7120 / SAG 25.82 / UTEX 2576).